The sequence spans 26 residues: DEAD-box ATP-dependent RNA helicase 1 (26 aa).

The Q motif motif lies at 1 to 10 (RELLMGIFEK). 11 to 16 (NGTGKT) is a binding site for ATP. A Helicase ATP-binding domain is found at 11 to 26 (NGTGKTAAFVIPLLQK).

This sequence belongs to the DEAD box helicase family. DDX6/DHH1 subfamily.

The protein localises to the cytoplasm. It localises to the P-body. The catalysed reaction is ATP + H2O = ADP + phosphate + H(+). ATP-dependent RNA helicase involved in mRNA turnover, and more specifically in mRNA decapping. In Catharanthus roseus (Madagascar periwinkle), this protein is DEAD-box ATP-dependent RNA helicase 1.